Reading from the N-terminus, the 142-residue chain is Large ribosomal subunit protein uL11 (142 aa).

Belongs to the universal ribosomal protein uL11 family. As to quaternary structure, part of the ribosomal stalk of the 50S ribosomal subunit. Interacts with L10 and the large rRNA to form the base of the stalk. L10 forms an elongated spine to which L12 dimers bind in a sequential fashion forming a multimeric L10(L12)X complex. One or more lysine residues are methylated.

Forms part of the ribosomal stalk which helps the ribosome interact with GTP-bound translation factors. The protein is Large ribosomal subunit protein uL11 of Sinorhizobium fredii (strain NBRC 101917 / NGR234).